The sequence spans 269 residues: Formamidopyrimidine-DNA glycosylase (269 aa).

The Schiff-base intermediate with DNA role is filled by P2. E3 functions as the Proton donor in the catalytic mechanism. Catalysis depends on K57, which acts as the Proton donor; for beta-elimination activity. H90, R109, and K150 together coordinate DNA. The FPG-type zinc-finger motif lies at Q235 to H269. R259 functions as the Proton donor; for delta-elimination activity in the catalytic mechanism.

It belongs to the FPG family. Monomer. Zn(2+) serves as cofactor.

It carries out the reaction Hydrolysis of DNA containing ring-opened 7-methylguanine residues, releasing 2,6-diamino-4-hydroxy-5-(N-methyl)formamidopyrimidine.. The enzyme catalyses 2'-deoxyribonucleotide-(2'-deoxyribose 5'-phosphate)-2'-deoxyribonucleotide-DNA = a 3'-end 2'-deoxyribonucleotide-(2,3-dehydro-2,3-deoxyribose 5'-phosphate)-DNA + a 5'-end 5'-phospho-2'-deoxyribonucleoside-DNA + H(+). Involved in base excision repair of DNA damaged by oxidation or by mutagenic agents. Acts as a DNA glycosylase that recognizes and removes damaged bases. Has a preference for oxidized purines, such as 7,8-dihydro-8-oxoguanine (8-oxoG). Has AP (apurinic/apyrimidinic) lyase activity and introduces nicks in the DNA strand. Cleaves the DNA backbone by beta-delta elimination to generate a single-strand break at the site of the removed base with both 3'- and 5'-phosphates. This chain is Formamidopyrimidine-DNA glycosylase, found in Yersinia enterocolitica serotype O:8 / biotype 1B (strain NCTC 13174 / 8081).